Here is a 396-residue protein sequence, read N- to C-terminus: Maltose/maltodextrin-binding periplasmic protein (396 aa).

A signal peptide spans 1 to 26 (MKIKTGARILALSALTTMMFSASALA).

The protein belongs to the bacterial solute-binding protein 1 family. In terms of assembly, the complex is composed of two ATP-binding proteins (MalK), two transmembrane proteins (MalG and MalF) and a solute-binding protein (MalE).

The protein localises to the periplasm. Its function is as follows. Part of the ABC transporter complex MalEFGK involved in maltose/maltodextrin import. Binds maltose and higher maltodextrins. The protein is Maltose/maltodextrin-binding periplasmic protein (malE) of Escherichia coli O157:H7.